Consider the following 141-residue polypeptide: Large ribosomal subunit protein uL11 (141 aa).

Belongs to the universal ribosomal protein uL11 family. Part of the ribosomal stalk of the 50S ribosomal subunit. Interacts with L10 and the large rRNA to form the base of the stalk. L10 forms an elongated spine to which L12 dimers bind in a sequential fashion forming a multimeric L10(L12)X complex. In terms of processing, one or more lysine residues are methylated.

In terms of biological role, forms part of the ribosomal stalk which helps the ribosome interact with GTP-bound translation factors. In Maridesulfovibrio salexigens (strain ATCC 14822 / DSM 2638 / NCIMB 8403 / VKM B-1763) (Desulfovibrio salexigens), this protein is Large ribosomal subunit protein uL11.